Consider the following 372-residue polypeptide: Glutamate 5-kinase (372 aa).

Lys14 lines the ATP pocket. Residues Ser54, Asp141, and Asn153 each coordinate substrate. 173–174 (TD) serves as a coordination point for ATP. A PUA domain is found at 280-358 (RGHVVIDAGA…GEIEIVLGYM (79 aa)).

Belongs to the glutamate 5-kinase family.

Its subcellular location is the cytoplasm. It catalyses the reaction L-glutamate + ATP = L-glutamyl 5-phosphate + ADP. The protein operates within amino-acid biosynthesis; L-proline biosynthesis; L-glutamate 5-semialdehyde from L-glutamate: step 1/2. In terms of biological role, catalyzes the transfer of a phosphate group to glutamate to form L-glutamate 5-phosphate. In Burkholderia orbicola (strain MC0-3), this protein is Glutamate 5-kinase.